A 315-amino-acid chain; its full sequence is Lipoyl synthase (315 aa).

[4Fe-4S] cluster is bound by residues cysteine 62, cysteine 67, cysteine 73, cysteine 88, cysteine 92, cysteine 95, and serine 302. One can recognise a Radical SAM core domain in the interval 74–292; the sequence is FNHGTATFMI…KIALKLGFIR (219 aa).

The protein belongs to the radical SAM superfamily. Lipoyl synthase family. Requires [4Fe-4S] cluster as cofactor.

It localises to the cytoplasm. The catalysed reaction is [[Fe-S] cluster scaffold protein carrying a second [4Fe-4S](2+) cluster] + N(6)-octanoyl-L-lysyl-[protein] + 2 oxidized [2Fe-2S]-[ferredoxin] + 2 S-adenosyl-L-methionine + 4 H(+) = [[Fe-S] cluster scaffold protein] + N(6)-[(R)-dihydrolipoyl]-L-lysyl-[protein] + 4 Fe(3+) + 2 hydrogen sulfide + 2 5'-deoxyadenosine + 2 L-methionine + 2 reduced [2Fe-2S]-[ferredoxin]. It functions in the pathway protein modification; protein lipoylation via endogenous pathway; protein N(6)-(lipoyl)lysine from octanoyl-[acyl-carrier-protein]: step 2/2. Its function is as follows. Catalyzes the radical-mediated insertion of two sulfur atoms into the C-6 and C-8 positions of the octanoyl moiety bound to the lipoyl domains of lipoate-dependent enzymes, thereby converting the octanoylated domains into lipoylated derivatives. This chain is Lipoyl synthase, found in Vesicomyosocius okutanii subsp. Calyptogena okutanii (strain HA).